The chain runs to 126 residues: Flagellar assembly factor FliW (126 aa).

This sequence belongs to the FliW family. Interacts with translational regulator CsrA and flagellin(s).

The protein localises to the cytoplasm. Its function is as follows. Acts as an anti-CsrA protein, binds CsrA and prevents it from repressing translation of its target genes, one of which is flagellin. Binds to flagellin and participates in the assembly of the flagellum. The polypeptide is Flagellar assembly factor FliW (Sulfurimonas denitrificans (strain ATCC 33889 / DSM 1251) (Thiomicrospira denitrificans (strain ATCC 33889 / DSM 1251))).